Reading from the N-terminus, the 344-residue chain is Probable Delta(7)-sterol 5(6)-desaturase (344 aa).

The next 3 membrane-spanning stretches (helical) occupy residues 76–96, 123–143, and 160–180; these read LSLFLILWLFGLVTYYVFASL, QTNAALPVMAFFTFPFLVAEV, and WYDFFQFPLFIMFTDFGIYWI. Positions 167–292 constitute a Fatty acid hydroxylase domain; sequence PLFIMFTDFG…FTTLWDRLGG (126 aa). Residues 181 to 185 carry the Histidine box-1 motif; the sequence is HRGLH. The short motif at 194–198 is the Histidine box-2 element; the sequence is HKPHH. A helical transmembrane segment spans residues 224–244; that stretch reads HIFPFIFPLQKMAYVGLFVFI. Positions 269–273 match the Histidine box-3 motif; that stretch reads HSVHH.

Belongs to the sterol desaturase family. Fe cation serves as cofactor.

The protein resides in the endoplasmic reticulum membrane. It catalyses the reaction a Delta(7)-sterol + 2 Fe(II)-[cytochrome b5] + O2 + 2 H(+) = a Delta(5),Delta(7)-sterol + 2 Fe(III)-[cytochrome b5] + 2 H2O. Its pathway is steroid metabolism; ergosterol biosynthesis; ergosterol from zymosterol: step 3/5. Catalyzes the introduction of a C-5 double bond in the B ring of ergosterol. May contribute to the regulation of ergosterol biosynthesis. The sequence is that of Probable Delta(7)-sterol 5(6)-desaturase from Neurospora crassa (strain ATCC 24698 / 74-OR23-1A / CBS 708.71 / DSM 1257 / FGSC 987).